Reading from the N-terminus, the 88-residue chain is Small ribosomal subunit protein uS15c (88 aa).

The protein belongs to the universal ribosomal protein uS15 family. As to quaternary structure, part of the 30S ribosomal subunit.

It localises to the plastid. The protein localises to the chloroplast. In Capsella bursa-pastoris (Shepherd's purse), this protein is Small ribosomal subunit protein uS15c (rps15).